The chain runs to 173 residues: NADH-ubiquinone oxidoreductase chain 6 (173 aa).

The next 5 helical transmembrane spans lie at 1–21 (MTYF…AVAS), 27–47 (YGVV…VSLG), 48–68 (VSFV…VVFV), 87–107 (VVGY…LGGL), and 139–159 (CGVG…FVVL).

This sequence belongs to the complex I subunit 6 family. Core subunit of respiratory chain NADH dehydrogenase (Complex I) which is composed of 45 different subunits.

The protein resides in the mitochondrion inner membrane. It catalyses the reaction a ubiquinone + NADH + 5 H(+)(in) = a ubiquinol + NAD(+) + 4 H(+)(out). In terms of biological role, core subunit of the mitochondrial membrane respiratory chain NADH dehydrogenase (Complex I) which catalyzes electron transfer from NADH through the respiratory chain, using ubiquinone as an electron acceptor. Essential for the catalytic activity and assembly of complex I. The chain is NADH-ubiquinone oxidoreductase chain 6 (MT-ND6) from Gallus gallus (Chicken).